The primary structure comprises 336 residues: UDP-3-O-acylglucosamine N-acyltransferase (336 aa).

Histidine 237 serves as the catalytic Proton acceptor.

The protein belongs to the transferase hexapeptide repeat family. LpxD subfamily. In terms of assembly, homotrimer.

It catalyses the reaction a UDP-3-O-[(3R)-3-hydroxyacyl]-alpha-D-glucosamine + a (3R)-hydroxyacyl-[ACP] = a UDP-2-N,3-O-bis[(3R)-3-hydroxyacyl]-alpha-D-glucosamine + holo-[ACP] + H(+). It functions in the pathway bacterial outer membrane biogenesis; LPS lipid A biosynthesis. Functionally, catalyzes the N-acylation of UDP-3-O-acylglucosamine using 3-hydroxyacyl-ACP as the acyl donor. Is involved in the biosynthesis of lipid A, a phosphorylated glycolipid that anchors the lipopolysaccharide to the outer membrane of the cell. This chain is UDP-3-O-acylglucosamine N-acyltransferase, found in Alcanivorax borkumensis (strain ATCC 700651 / DSM 11573 / NCIMB 13689 / SK2).